A 447-amino-acid chain; its full sequence is NADP-specific glutamate dehydrogenase (447 aa).

The substrate site is built by K92, Q113, and K116. The active-site Proton donor is K128. G167 lines the substrate pocket. NADP(+) is bound by residues T211 and N242. Substrate is bound at residue S380.

The protein belongs to the Glu/Leu/Phe/Val dehydrogenases family. As to quaternary structure, homohexamer.

It catalyses the reaction L-glutamate + NADP(+) + H2O = 2-oxoglutarate + NH4(+) + NADPH + H(+). Competitively inhibited by homoserine and by glutamine. Catalyzes the reversible oxidative deamination of glutamate to alpha-ketoglutarate and ammonia. This is NADP-specific glutamate dehydrogenase from Escherichia coli (strain K12).